The following is a 233-amino-acid chain: Large ribosomal subunit protein uL1 (233 aa).

It belongs to the universal ribosomal protein uL1 family. In terms of assembly, part of the 50S ribosomal subunit.

Binds directly to 23S rRNA. The L1 stalk is quite mobile in the ribosome, and is involved in E site tRNA release. Functionally, protein L1 is also a translational repressor protein, it controls the translation of the L11 operon by binding to its mRNA. This is Large ribosomal subunit protein uL1 from Shewanella piezotolerans (strain WP3 / JCM 13877).